Reading from the N-terminus, the 226-residue chain is Putative ABC transporter ATP-binding protein DR_2469 (226 aa).

Positions 2 to 225 (IELRHVSHHY…LRVYRERMTW (224 aa)) constitute an ABC transporter domain. ATP is bound at residue 33–40 (GSNGSGKS).

Belongs to the ABC transporter superfamily.

The protein resides in the cell membrane. Its function is as follows. Probably part of an ABC transporter complex. Responsible for energy coupling to the transport system. In Deinococcus radiodurans (strain ATCC 13939 / DSM 20539 / JCM 16871 / CCUG 27074 / LMG 4051 / NBRC 15346 / NCIMB 9279 / VKM B-1422 / R1), this protein is Putative ABC transporter ATP-binding protein DR_2469.